The primary structure comprises 602 residues: Cytokine-like nuclear factor N-PAC (602 aa).

Phosphoserine is present on residues S8 and S10. The 60-residue stretch at 22 to 81 folds into the PWWP domain; the sequence is PKDLIWAKMKGFTPWPGMIVDPPLDLLSQQRRANTKCVFFFGSRNFAWIEENNIKPFEGP. The tract at residues 162 to 262 is disordered; sequence GSPDEGDGLD…ASSTPTGRRR (101 aa). 3 stretches are compositionally biased toward polar residues: residues 176–188, 204–217, and 224–233; these read ADSS…SPAV, AATS…SAKS, and SAQQSPSGPS. A phosphoserine mark is found at S224, S228, and S243. The interval 309–602 is dehydrogenase domain; that stretch reads RDIVPSEQTF…SSAVFVRSRF (294 aa). Residues 319-333, T411, and R554 contribute to the NAD(+) site; that span reads GFLG…IVKD.

It belongs to the HIBADH-related family. NP60 subfamily. Binds to mononucleosomes. Interacts with male-specific lethal (MSL) histone acetyltransferase complex at least composed of mof, msl-1, msl-2 and msl-3.

The protein resides in the chromosome. Its function is as follows. Nucleosome-destabilizing factor that is recruited to genes during transcriptional activation and colocalizes with a subset of trimethylated 'Lys-36' histone H3 (H3K36me3)-enriched regions. Binds DNA (in vitro). Facilitates Pol II transcription through nucleosomes. Facilitates male-specific lethal (MSL) histone acetyltransferase complex targeting to active genes on the X chromosome. Stimulates the acetylation of 'Lys-56' of nucleosomal histone H3 (H3K56ac) by nej. May have oxidoreductase activity. This chain is Cytokine-like nuclear factor N-PAC, found in Drosophila melanogaster (Fruit fly).